Here is a 213-residue protein sequence, read N- to C-terminus: Probable transaldolase (213 aa).

The active-site Schiff-base intermediate with substrate is the Lys83.

Belongs to the transaldolase family. Type 3B subfamily.

It is found in the cytoplasm. It carries out the reaction D-sedoheptulose 7-phosphate + D-glyceraldehyde 3-phosphate = D-erythrose 4-phosphate + beta-D-fructose 6-phosphate. The protein operates within carbohydrate degradation; pentose phosphate pathway; D-glyceraldehyde 3-phosphate and beta-D-fructose 6-phosphate from D-ribose 5-phosphate and D-xylulose 5-phosphate (non-oxidative stage): step 2/3. In terms of biological role, transaldolase is important for the balance of metabolites in the pentose-phosphate pathway. The polypeptide is Probable transaldolase (Geobacillus kaustophilus (strain HTA426)).